The primary structure comprises 354 residues: tRNA-specific 2-thiouridylase MnmA (354 aa).

ATP is bound by residues 6–13 (LLSGGVDS) and Leu33. Catalysis depends on Cys100, which acts as the Nucleophile. An intrachain disulfide couples Cys100 to Cys195. Gly123 is a binding site for ATP. Residues 145–147 (KDQ) are interaction with tRNA. The active-site Cysteine persulfide intermediate is the Cys195.

It belongs to the MnmA/TRMU family.

Its subcellular location is the cytoplasm. The enzyme catalyses S-sulfanyl-L-cysteinyl-[protein] + uridine(34) in tRNA + AH2 + ATP = 2-thiouridine(34) in tRNA + L-cysteinyl-[protein] + A + AMP + diphosphate + H(+). Catalyzes the 2-thiolation of uridine at the wobble position (U34) of tRNA, leading to the formation of s(2)U34. This chain is tRNA-specific 2-thiouridylase MnmA, found in Borrelia hermsii (strain HS1 / DAH).